A 113-amino-acid polypeptide reads, in one-letter code: Protein crumbs homolog 3 (113 aa).

The N-terminal stretch at 1–24 is a signal peptide; the sequence is MATPGLGVLLAFGLPMLPSGWSLT. The interval 23 to 44 is disordered; the sequence is LTAPDPFTNSTTQPPGDESNGG. The Extracellular portion of the chain corresponds to 25–49; it reads APDPFTNSTTQPPGDESNGGLSSGA. N-linked (GlcNAc...) asparagine glycosylation occurs at asparagine 31. Residues 50–70 traverse the membrane as a helical segment; the sequence is IVAITVVFSILGVLLIAVGLF. The Cytoplasmic segment spans residues 71 to 113; that stretch reads LLMRKLREKRQTEGTYRPSSEEQVGARAPPPPNLKLPPEERLI. The segment at 77–113 is interaction with EPB41L5; it reads REKRQTEGTYRPSSEEQVGARAPPPPNLKLPPEERLI. The interval 80-113 is disordered; the sequence is RQTEGTYRPSSEEQVGARAPPPPNLKLPPEERLI. The segment covering 83-92 has biased composition (polar residues); that stretch reads EGTYRPSSEE. The short motif at 110 to 113 is the PDZ-binding element; sequence ERLI.

As to quaternary structure, component of a complex composed of CRB3, PALS1 and PATJ. Interacts (via C-terminus) with PALS1 (via PDZ domain). Interacts with PARD6A. Interacts (via intracellular domain) with EPB41L5. Interacts with WDR83. As to expression, expressed in the apical renal tubules (at protein level). Expressed in the retinal pigment epithelium.

The protein localises to the apical cell membrane. It is found in the cell junction. Its subcellular location is the tight junction. Involved in the establishment of cell polarity in mammalian epithelial cells. Regulates the morphogenesis of tight junctions. Involved in promoting phosphorylation and cytoplasmic retention of transcriptional coactivators YAP1 and WWTR1/TAZ which leads to suppression of TGFB1-dependent transcription of target genes such as CCN2/CTGF, SERPINE1/PAI1, SNAI1/SNAIL1 and SMAD7. The sequence is that of Protein crumbs homolog 3 (Crb3) from Mus musculus (Mouse).